A 357-amino-acid chain; its full sequence is Dihydroflavonol 4-reductase (357 aa).

Residues K49 and Y168 each coordinate NADP(+).

This sequence belongs to the NAD(P)-dependent epimerase/dehydratase family. Dihydroflavonol-4-reductase subfamily.

It carries out the reaction a (2R,3S,4S)-leucoanthocyanidin + NADP(+) = a (2R,3R)-dihydroflavonol + NADPH + H(+). The enzyme catalyses (2S)-flavan-4-ol + NADP(+) = (2S)-flavanone + NADPH + H(+). It functions in the pathway pigment biosynthesis; anthocyanin biosynthesis. Its function is as follows. Bifunctional enzyme involved in flavonoid metabolism. This Zea mays (Maize) protein is Dihydroflavonol 4-reductase (A1).